The sequence spans 210 residues: Probable GTP-binding protein EngB (210 aa).

Positions Asn-29–Pro-203 constitute an EngB-type G domain. Residues Gly-37–Ser-44, Gly-64–Leu-68, Asp-82–Gly-85, Thr-149–Asp-152, and Ile-181–Ala-184 each bind GTP. Ser-44 and Thr-66 together coordinate Mg(2+).

Belongs to the TRAFAC class TrmE-Era-EngA-EngB-Septin-like GTPase superfamily. EngB GTPase family. Requires Mg(2+) as cofactor.

In terms of biological role, necessary for normal cell division and for the maintenance of normal septation. This Haemophilus ducreyi (strain 35000HP / ATCC 700724) protein is Probable GTP-binding protein EngB.